Here is a 638-residue protein sequence, read N- to C-terminus: Chaperone protein DnaK (638 aa).

T199 carries the post-translational modification Phosphothreonine; by autocatalysis. Residues 600–638 (EINQKKSEENLKKEDTSSESKKDENVVDAEFEEIKDPKK) are disordered. The span at 602–624 (NQKKSEENLKKEDTSSESKKDEN) shows a compositional bias: basic and acidic residues.

This sequence belongs to the heat shock protein 70 family.

Acts as a chaperone. The sequence is that of Chaperone protein DnaK from Buchnera aphidicola subsp. Schizaphis graminum (strain Sg).